The following is a 339-amino-acid chain: Flap endonuclease 1 (339 aa).

The tract at residues Met-1–Lys-99 is N-domain. Mg(2+)-binding residues include Asp-29, Asp-81, Glu-153, Glu-155, Asp-174, Asp-176, and Asp-237. The segment at Glu-117–Gly-258 is I-domain. Residues Asn-329–Phe-337 are interaction with PCNA.

Belongs to the XPG/RAD2 endonuclease family. FEN1 subfamily. In terms of assembly, interacts with PCNA. PCNA stimulates the nuclease activity without altering cleavage specificity. Requires Mg(2+) as cofactor.

Structure-specific nuclease with 5'-flap endonuclease and 5'-3' exonuclease activities involved in DNA replication and repair. During DNA replication, cleaves the 5'-overhanging flap structure that is generated by displacement synthesis when DNA polymerase encounters the 5'-end of a downstream Okazaki fragment. Binds the unpaired 3'-DNA end and kinks the DNA to facilitate 5' cleavage specificity. Cleaves one nucleotide into the double-stranded DNA from the junction in flap DNA, leaving a nick for ligation. Also involved in the base excision repair (BER) pathway. Acts as a genome stabilization factor that prevents flaps from equilibrating into structures that lead to duplications and deletions. Also possesses 5'-3' exonuclease activity on nicked or gapped double-stranded DNA. The protein is Flap endonuclease 1 of Nanoarchaeum equitans (strain Kin4-M).